The chain runs to 253 residues: Sec-independent protein translocase protein TatC (253 aa).

Helical transmembrane passes span 18–38 (VSVGTILVAFLGCFHFWKSIF), 69–89 (AIVISMPIIFWQLWLFIAPGL), 96–116 (VILPFVFFGSGMFLIGAAFSY), 151–171 (LILGFGVAFELPVLAYFLAKV), 187–207 (IVVIFIVAAIITPPDVVSQIF), and 208–228 (MALPLVGLYGLSILIAKMVNP). The disordered stretch occupies residues 231–253 (KDNENNNENNNENNTKENTKSES). Residues 244–253 (NTKENTKSES) are compositionally biased toward basic and acidic residues.

This sequence belongs to the TatC family. The Tat system comprises two distinct complexes: a TatABC complex, containing multiple copies of TatA, TatB and TatC subunits, and a separate TatA complex, containing only TatA subunits. Substrates initially bind to the TatABC complex, which probably triggers association of the separate TatA complex to form the active translocon.

It is found in the cell inner membrane. Its function is as follows. Part of the twin-arginine translocation (Tat) system that transports large folded proteins containing a characteristic twin-arginine motif in their signal peptide across membranes. Together with TatB, TatC is part of a receptor directly interacting with Tat signal peptides. The chain is Sec-independent protein translocase protein TatC from Helicobacter pylori (strain ATCC 700392 / 26695) (Campylobacter pylori).